We begin with the raw amino-acid sequence, 297 residues long: 33 kDa chaperonin (297 aa).

Intrachain disulfides connect cysteine 232-cysteine 234 and cysteine 266-cysteine 269.

The protein belongs to the HSP33 family. In terms of processing, under oxidizing conditions two disulfide bonds are formed involving the reactive cysteines. Under reducing conditions zinc is bound to the reactive cysteines and the protein is inactive.

It is found in the cytoplasm. In terms of biological role, redox regulated molecular chaperone. Protects both thermally unfolding and oxidatively damaged proteins from irreversible aggregation. Plays an important role in the bacterial defense system toward oxidative stress. In Pseudomonas aeruginosa (strain LESB58), this protein is 33 kDa chaperonin.